Reading from the N-terminus, the 162-residue chain is NADH-quinone oxidoreductase subunit I (162 aa).

4Fe-4S ferredoxin-type domains lie at 52–82 (LRRY…IEAG) and 93–122 (TRYD…EGPN). 8 residues coordinate [4Fe-4S] cluster: cysteine 62, cysteine 65, cysteine 68, cysteine 72, cysteine 102, cysteine 105, cysteine 108, and cysteine 112.

The protein belongs to the complex I 23 kDa subunit family. NDH-1 is composed of 14 different subunits. Subunits NuoA, H, J, K, L, M, N constitute the membrane sector of the complex. It depends on [4Fe-4S] cluster as a cofactor.

The protein resides in the cell inner membrane. It catalyses the reaction a quinone + NADH + 5 H(+)(in) = a quinol + NAD(+) + 4 H(+)(out). Its function is as follows. NDH-1 shuttles electrons from NADH, via FMN and iron-sulfur (Fe-S) centers, to quinones in the respiratory chain. The immediate electron acceptor for the enzyme in this species is believed to be ubiquinone. Couples the redox reaction to proton translocation (for every two electrons transferred, four hydrogen ions are translocated across the cytoplasmic membrane), and thus conserves the redox energy in a proton gradient. This chain is NADH-quinone oxidoreductase subunit I, found in Methylorubrum extorquens (strain PA1) (Methylobacterium extorquens).